The following is a 277-amino-acid chain: Purine nucleoside phosphorylase 2 (277 aa).

Phosphate is bound by residues His-65, 85–87 (RGH), and Ala-117. Glu-197 contributes to the a purine D-ribonucleoside binding site. Ser-216 lines the phosphate pocket. Asn-239 contributes to the a purine D-ribonucleoside binding site.

This sequence belongs to the PNP/MTAP phosphorylase family. Hexamer. Dimer of trimers.

The enzyme catalyses a purine D-ribonucleoside + phosphate = a purine nucleobase + alpha-D-ribose 1-phosphate. The protein operates within purine metabolism; xanthosine degradation. Its pathway is purine metabolism; purine nucleoside salvage. With respect to regulation, rapidly inactivated by p-chloromercuriphenylsulfonic acid (p-CMB). Dithiothreitol incubation restores the activity. In terms of biological role, the purine nucleoside phosphorylases catalyze the phosphorolytic breakdown of the N-glycosidic bond in the beta-(deoxy)ribonucleoside molecules, with the formation of the corresponding free purine bases and pentose-1-phosphate. This protein can degrade all purine nucleosides including xanthosine, inosine and guanosine, but cannot cleave adenosine, deoxyadenosine or hypoxanthine arabinoside. Has a preference for the neutral over the monoanionic form of xanthosine. This is Purine nucleoside phosphorylase 2 (xapA) from Escherichia coli (strain K12).